The primary structure comprises 2399 residues: Norsolorinic acid synthase (2399 aa).

Residues 10 to 247 (LVFGDQTYDF…RQIPIYVPAH (238 aa)) form a starter unit:ACP transacylase (SAT) domain region. Positions 372–805 (KSKLAIVSMS…GGNTALLIED (434 aa)) constitute a Ketosynthase family 3 (KS3) domain. Catalysis depends on for beta-ketoacyl synthase activity residues Cys544, His679, and His722. Residues 905–1192 (FAFTGQGSQY…LCGMIKNILG (288 aa)) are malonyl-CoA:ACP transacylase (MAT) domain. The active-site For acyl/malonyl transferase activity is the Ser995. Residues 1307-1327 (VQEAPAAKTETKKMSKLDPTK) are disordered. Residues 1315–1327 (TETKKMSKLDPTK) are compositionally biased toward basic and acidic residues. Residues 1340–1483 (HKVIEEKTEP…CTVRFTTDSQ (144 aa)) are N-terminal hotdog fold. The PKS/mFAS DH domain occupies 1340–1658 (HKVIEEKTEP…LRSVPRKALR (319 aa)). The interval 1353–1658 (QFTVETDISR…LRSVPRKALR (306 aa)) is product template (PT) domain. The active-site Proton acceptor; for dehydratase activity is the His1372. The interval 1510–1658 (LTHYNTKSGY…LRSVPRKALR (149 aa)) is C-terminal hotdog fold. Catalysis depends on Asp1570, which acts as the Proton donor; for dehydratase activity. Residues 1665–1734 (MDKGIRQRGG…AALKASVPKA (70 aa)) form a disordered region. A compositionally biased stretch (low complexity) spans 1677-1698 (GAAKGAVAAPAPAKKMVEPVKA). A compositionally biased stretch (pro residues) spans 1708–1723 (AAPPSPSKAAPPPAPK). Residues 1724–1734 (PAALKASVPKA) are compositionally biased toward low complexity. 3 Carrier domains span residues 1733-1812 (KADP…AGAA), 1877-1953 (SKVF…GGSG), and 2020-2099 (VART…TGSS). Ser1770, Ser1911, and Ser2057 each carry O-(pantetheine 4'-phosphoryl)serine. Over residues 2098–2115 (SSADSDSSSVASNPADPA) the composition is skewed to low complexity. Residues 2098–2149 (SSADSDSSSVASNPADPAATPPRSESSDTEPDDEAPSKPKSGPGSTDSCRST) are disordered. The span at 2140–2149 (PGSTDSCRST) shows a compositional bias: polar residues. The thioesterase/Claisen cyclase (TE/CLC) domain stretch occupies residues 2164–2393 (TLFLLPDGGG…KARVNYVSDL (230 aa)). Ser2234 acts as the For thioesterase activity in catalysis.

It depends on pantetheine 4'-phosphate as a cofactor.

It carries out the reaction hexanoyl-[ACP] + 7 malonyl-CoA + 6 H(+) = noranthrone + holo-[ACP] + 7 CO2 + 7 CoA + 2 H2O. It participates in mycotoxin biosynthesis. Polyketide synthase; part of the fragmented gene cluster that mediates the biosynthesis of dothistromin (DOTH), a polyketide toxin very similar in structure to the aflatoxin precursor, versicolorin B. The first step of the pathway is the conversion of acetate to norsolorinic acid (NOR) and requires the fatty acid synthase subunits hexA and hexB, as well as the polyketide synthase pksA. PksA combines a hexanoyl starter unit and 7 malonyl-CoA extender units to synthesize the precursor NOR. The hexanoyl starter unit is provided to the acyl-carrier protein (ACP) domain by the fungal fatty acid synthase hexA/hexB. The second step is the conversion of NOR to averantin (AVN) and requires the norsolorinic acid ketoreductase nor1, which catalyzes the dehydration of norsolorinic acid to form (1'S)-averantin. The cytochrome P450 monooxygenase avnA then catalyzes the hydroxylation of AVN to 5'hydroxyaverantin (HAVN). The next step is performed by adhA that transforms HAVN to averufin (AVF). Averufin might then be converted to hydroxyversicolorone by cypX and avfA. Hydroxyversicolorone is further converted versiconal hemiacetal acetate (VHA) by moxY. VHA is then the substrate for the versiconal hemiacetal acetate esterase est1 to yield versiconal (VAL). Versicolorin B synthase vbsA then converts VAL to versicolorin B (VERB) by closing the bisfuran ring. Then, the activity of the versicolorin B desaturase verB leads to versicolorin A (VERA). DotB, a predicted chloroperoxidase, may perform epoxidation of the A-ring of VERA. Alternatively, a cytochrome P450, such as cypX or avnA could catalyze this step. It is also possible that another, uncharacterized, cytochrome P450 enzyme is responsible for this step. Opening of the epoxide could potentially be achieved by the epoxide hydrolase epoA. However, epoA seems not to be required for DOTH biosynthesis, but other epoxide hydrolases may have the ability to complement this hydrolysis. Alternatively, opening of the epoxide ring could be achieved non-enzymatically. The next step is the deoxygenation of ring A to yield the 5,8-dihydroxyanthraquinone which is most likely catalyzed by the NADPH dehydrogenase encoded by ver1. The last stages of DOTH biosynthesis are proposed to involve hydroxylation of the bisfuran. OrdB and norB might have oxidative roles here. An alternative possibility is that cytochrome P450 monoogenases such as avnA and cypX might perform these steps in addition to previously proposed steps. The protein is Norsolorinic acid synthase of Dothistroma septosporum (Red band needle blight fungus).